Here is a 1462-residue protein sequence, read N- to C-terminus: Iron-sulfur cluster assembly protein SufD (1462 aa).

Disordered regions lie at residues 500-525 (IDNNQNDDIDNNNNNNNNNNNCDNPY), 938-970 (NQNKENENENENNSQSDNNTTKQHIQDEQGTEQ), and 1111-1153 (NIPS…EKEE). Low complexity predominate over residues 510–523 (NNNNNNNNNNNCDN). The span at 961-970 (HIQDEQGTEQ) shows a compositional bias: basic and acidic residues. The span at 1111–1136 (NIPSNNKQTNSNNNSEYNNEQNNCSN) shows a compositional bias: low complexity.

It belongs to the iron-sulfur cluster assembly SufBD family. Component of a complex composed of SufB, SufC and SufD in a stoichiometric ratio of 1:2:1. Interacts with SufB. Interacts with SufC; the interaction enhances the ATPase activity of SufC. In terms of processing, proteolytically cleaved.

The protein resides in the plastid. It is found in the apicoplast. It participates in cofactor biosynthesis; iron-sulfur cluster biosynthesis. In terms of biological role, participates in the sulfur mobilization (SUF) pathway for iron-sulfur (Fe-S) cluster biogenesis. As part of a complex consisting of SufB-SufC(2)-SufD, involved in assembly of [4Fe-4S] clusters. Enhances the ATPase activity of SufC. The sequence is that of Iron-sulfur cluster assembly protein SufD from Plasmodium falciparum (isolate 3D7).